Reading from the N-terminus, the 1048-residue chain is Dyslexia-associated protein KIAA0319-like protein (1048 aa).

Residues 1 to 29 (MEKRLGVKPSPASWVLPGYCWQTSVKLPR) are Cytoplasmic-facing. The chain crosses the membrane as a helical span at residues 30–50 (SLYLLYSFFCFSVLWLSTDAD). Residues 49–127 (ADESRCQQGK…PFRTDSSNSM (79 aa)) form the MANSC domain. The Extracellular segment spans residues 51 to 928 (ESRCQQGKTL…RDGDSNCEWS (878 aa)). Disordered regions lie at residues 198 to 218 (HGAM…LSPT) and 231 to 300 (SFTS…STSA). Residues 231 to 241 (SFTSNHTTQTP) show a composition bias toward polar residues. N-linked (GlcNAc...) asparagine glycosylation occurs at Asn-246. 2 stretches are compositionally biased toward low complexity: residues 247-261 (VSIH…SPVS) and 287-300 (ATPT…STSA). PKD domains lie at 309 to 400 (VVSA…VKPE), 408 to 497 (VAVV…VNKA), 503 to 593 (VANA…VQPE), 599 to 687 (QADA…VKEE), and 693 to 784 (VAKI…VKPD). An N-linked (GlcNAc...) asparagine glycan is attached at Asn-394. The segment at 593–623 (ENNKPPQADAGPDKELTLPVDSTTLDGSKST) is disordered. The chain crosses the membrane as a helical span at residues 929-949 (VLYVIIASFVIVVALGILSWT). The Cytoplasmic segment spans residues 950-1048 (TICCCKRQKG…KSRSAREEIL (99 aa)). Thr-973 bears the Phosphothreonine mark. Phosphoserine is present on Ser-977. Residues 980 to 1007 (LKPTSRAGSKQKGPTLSSSLMHSESELD) form a disordered region. Residues 985 to 994 (RAGSKQKGPT) show a composition bias toward polar residues. A phosphoserine mark is found at Ser-1008 and Ser-1030. Positions 1024–1048 (LYGQNGSVPNGQTPLKSRSAREEIL) are disordered. Positions 1027–1039 (QNGSVPNGQTPLK) are enriched in polar residues. Thr-1036 carries the post-translational modification Phosphothreonine.

In terms of assembly, interacts with RTN4R. Post-translationally, N-glycosylated.

The protein resides in the cytoplasmic granule membrane. It is found in the golgi apparatus membrane. It localises to the golgi apparatus. Its subcellular location is the trans-Golgi network membrane. The protein localises to the cell membrane. Functionally, possible role in axon guidance through interaction with RTN4R. (Microbial infection) Acts as a receptor for adeno-associated virus and is involved in adeno-associated virus infection through endocytosis system. The protein is Dyslexia-associated protein KIAA0319-like protein of Mus musculus (Mouse).